Reading from the N-terminus, the 700-residue chain is Elongation factor G (700 aa).

The tr-type G domain occupies 8-290; sequence DKYRNIGISA…AVVELLPSPL (283 aa). GTP-binding positions include 17–24, 88–92, and 142–145; these read AHIDAGKT, DTPGH, and NKMD.

The protein belongs to the TRAFAC class translation factor GTPase superfamily. Classic translation factor GTPase family. EF-G/EF-2 subfamily.

The protein localises to the cytoplasm. Catalyzes the GTP-dependent ribosomal translocation step during translation elongation. During this step, the ribosome changes from the pre-translocational (PRE) to the post-translocational (POST) state as the newly formed A-site-bound peptidyl-tRNA and P-site-bound deacylated tRNA move to the P and E sites, respectively. Catalyzes the coordinated movement of the two tRNA molecules, the mRNA and conformational changes in the ribosome. The sequence is that of Elongation factor G from Polynucleobacter necessarius subsp. necessarius (strain STIR1).